Here is a 530-residue protein sequence, read N- to C-terminus: Phosphoenolpyruvate carboxykinase (ATP) (530 aa).

Residues Arg-58, Tyr-195, and Lys-201 each contribute to the substrate site. Residues Lys-201, His-220, and 236-244 (GLSGTGKTT) contribute to the ATP site. Mn(2+)-binding residues include Lys-201 and His-220. Mn(2+) is bound at residue Asp-257. ATP is bound by residues Glu-285, Arg-321, 440–441 (RI), and Thr-446. Residue Arg-321 coordinates substrate.

This sequence belongs to the phosphoenolpyruvate carboxykinase (ATP) family. The cofactor is Mn(2+).

Its subcellular location is the cytoplasm. The enzyme catalyses oxaloacetate + ATP = phosphoenolpyruvate + ADP + CO2. The protein operates within carbohydrate biosynthesis; gluconeogenesis. Functionally, involved in the gluconeogenesis. Catalyzes the conversion of oxaloacetate (OAA) to phosphoenolpyruvate (PEP) through direct phosphoryl transfer between the nucleoside triphosphate and OAA. This Staphylococcus epidermidis (strain ATCC 12228 / FDA PCI 1200) protein is Phosphoenolpyruvate carboxykinase (ATP).